Consider the following 432-residue polypeptide: Trigger factor (432 aa).

The 86-residue stretch at Glu161–Pro246 folds into the PPIase FKBP-type domain.

This sequence belongs to the FKBP-type PPIase family. Tig subfamily.

It is found in the cytoplasm. It carries out the reaction [protein]-peptidylproline (omega=180) = [protein]-peptidylproline (omega=0). Functionally, involved in protein export. Acts as a chaperone by maintaining the newly synthesized protein in an open conformation. Functions as a peptidyl-prolyl cis-trans isomerase. The polypeptide is Trigger factor (Salmonella schwarzengrund (strain CVM19633)).